Here is a 249-residue protein sequence, read N- to C-terminus: tRNA (guanine-N(1)-)-methyltransferase (249 aa).

S-adenosyl-L-methionine is bound by residues Gly113 and 133–138 (VGDYVL).

Belongs to the RNA methyltransferase TrmD family. Homodimer.

Its subcellular location is the cytoplasm. It carries out the reaction guanosine(37) in tRNA + S-adenosyl-L-methionine = N(1)-methylguanosine(37) in tRNA + S-adenosyl-L-homocysteine + H(+). Functionally, specifically methylates guanosine-37 in various tRNAs. This chain is tRNA (guanine-N(1)-)-methyltransferase, found in Tolumonas auensis (strain DSM 9187 / NBRC 110442 / TA 4).